We begin with the raw amino-acid sequence, 118 residues long: Large ribosomal subunit protein bL20 (118 aa).

The protein belongs to the bacterial ribosomal protein bL20 family.

Binds directly to 23S ribosomal RNA and is necessary for the in vitro assembly process of the 50S ribosomal subunit. It is not involved in the protein synthesizing functions of that subunit. This is Large ribosomal subunit protein bL20 from Psychrobacter sp. (strain PRwf-1).